Here is a 762-residue protein sequence, read N- to C-terminus: Probable disease resistance protein At1g61300 (762 aa).

Residue glycine 2 is the site of N-myristoyl glycine attachment. S-palmitoyl cysteine attachment occurs at residues cysteine 3 and cysteine 4. The region spanning 26–329 is the NB-ARC domain; it reads NINRNSFGVE…CEGFIGEDQV (304 aa). 68-75 is a binding site for ATP; the sequence is GMGGVGKT. 5 LRR repeats span residues 401–422, 423–444, 447–470, 471–493, and 494–516; these read AVRRMSLMDNHIEEITCESKCS, ELTTLFLQSNQLKNLSGEFIRY, KLVVLDLSYNRDFNKLPEQISGLV, SLQFLDLSNTSIKQLPVGLKKLK, and KLTFLNLAYTVRLCSISGISRLL.

The protein belongs to the disease resistance NB-LRR family.

It localises to the cell membrane. Functionally, probable disease resistance protein. The sequence is that of Probable disease resistance protein At1g61300 from Arabidopsis thaliana (Mouse-ear cress).